We begin with the raw amino-acid sequence, 473 residues long: ATP synthase subunit beta (473 aa).

Position 153–160 (153–160 (GGAGVGKT)) interacts with ATP.

The protein belongs to the ATPase alpha/beta chains family. As to quaternary structure, F-type ATPases have 2 components, CF(1) - the catalytic core - and CF(0) - the membrane proton channel. CF(1) has five subunits: alpha(3), beta(3), gamma(1), delta(1), epsilon(1). CF(0) has three main subunits: a(1), b(2) and c(9-12). The alpha and beta chains form an alternating ring which encloses part of the gamma chain. CF(1) is attached to CF(0) by a central stalk formed by the gamma and epsilon chains, while a peripheral stalk is formed by the delta and b chains.

It is found in the cell inner membrane. It carries out the reaction ATP + H2O + 4 H(+)(in) = ADP + phosphate + 5 H(+)(out). Functionally, produces ATP from ADP in the presence of a proton gradient across the membrane. The catalytic sites are hosted primarily by the beta subunits. This is ATP synthase subunit beta from Rickettsia canadensis (strain McKiel).